The following is a 172-amino-acid chain: Envelope protein UL45 (172 aa).

Over 1 to 27 (MPLRASEHAYRPLGPGTPPVRARLPAA) the chain is Intravirion. Residues 28–48 (AWVGVGTIIGGVVIIAALVLV) form a helical; Signal-anchor for type II membrane protein membrane-spanning segment. Over 49–172 (PSRASWALSP…TSTRNALGLP (124 aa)) the chain is Virion surface.

This sequence belongs to the herpesviridae HHV-1 UL45 family.

The protein resides in the virion membrane. In terms of biological role, important virulence factor of HSV neurotropism. Seems to be required for glycoprotein B-induced fusion. Dispensable for growth in vitro. This Homo sapiens (Human) protein is Envelope protein UL45.